We begin with the raw amino-acid sequence, 308 residues long: Maspardin (308 aa).

An AB hydrolase-1 domain is found at 87-159 (FCDGFRKLLD…NSFWLMPAFM (73 aa)).

It belongs to the AB hydrolase superfamily. In terms of assembly, interacts with CD4. Interacts with ALDH16A1.

It localises to the cytoplasm. Its function is as follows. May play a role as a negative regulatory factor in CD4-dependent T-cell activation. This chain is Maspardin (SPG21), found in Macaca fascicularis (Crab-eating macaque).